The following is a 740-amino-acid chain: Vacuolar protein sorting-associated protein 51 homolog (740 aa).

2 coiled-coil regions span residues 65–87 and 322–344; these read SATDTIRRMKDDFKQMETDVNLL and RALDRLHRRLQAMRNICRGLEVQ.

This sequence belongs to the VPS51 family. In terms of assembly, component of the Golgi-associated retrograde protein (GARP) complex.

Functionally, may act as a component of the GARP complex that is involved in retrograde transport from early and late endosomes to the trans-Golgi network (TGN). This Drosophila melanogaster (Fruit fly) protein is Vacuolar protein sorting-associated protein 51 homolog.